Reading from the N-terminus, the 99-residue chain is DNA-binding protein Fis (99 aa).

The H-T-H motif DNA-binding region spans Q75–K94.

This sequence belongs to the transcriptional regulatory Fis family. Homodimer.

Activates ribosomal RNA transcription. Plays a direct role in upstream activation of rRNA promoters. In Haemophilus influenzae (strain PittEE), this protein is DNA-binding protein Fis.